Consider the following 85-residue polypeptide: Small muscular protein (85 aa).

A disordered region spans residues 19–63 (PMGAFRPGAGQPPRRKESTPGTAEGAPATPEEKKPVPGMKKFPGP). Ser36 carries the post-translational modification Phosphoserine. At Thr47 the chain carries Phosphothreonine.

This sequence belongs to the SMPX family.

Its function is as follows. Plays a role in the regulatory network through which muscle cells coordinate their structural and functional states during growth, adaptation, and repair. The protein is Small muscular protein (Smpx) of Rattus norvegicus (Rat).